The sequence spans 533 residues: Atypical kinase COQ8B, mitochondrial (533 aa).

Residues 93–109 (LASFGGLAVGLGLGALA) form a helical membrane-spanning segment. Positions 156–159 (KIGQ) match the KxGQ motif motif. The Protein kinase domain maps to 192-424 (MMRVLEEELG…DRVLQKSQDL (233 aa)). The AAAS motif motif lies at 217-220 (AAAS). Residues serine 220, lysine 238, and 325-328 (MELA) each bind ATP. Aspartate 368 functions as the Proton acceptor in the catalytic mechanism. ATP-binding residues include asparagine 373 and aspartate 387.

Belongs to the protein kinase superfamily. ADCK protein kinase family. Homodimer; homodimerizes via its transmembrane region. Interacts with COQ6 and COQ7. Interacts with the multi-subunit COQ enzyme complex, composed of at least COQ3, COQ4, COQ5, COQ6, COQ7 and COQ9.

The protein localises to the mitochondrion membrane. It is found in the cytoplasm. The protein resides in the cytosol. Its subcellular location is the cell membrane. The protein operates within cofactor biosynthesis; ubiquinone biosynthesis. Its function is as follows. Atypical kinase involved in the biosynthesis of coenzyme Q, also named ubiquinone, an essential lipid-soluble electron transporter for aerobic cellular respiration. Its substrate specificity is still unclear: may act as a protein kinase that mediates phosphorylation of COQ3. According to other reports, acts as a small molecule kinase, possibly a lipid kinase that phosphorylates a prenyl lipid in the ubiquinone biosynthesis pathway, as suggested by its ability to bind coenzyme Q lipid intermediates. However, the small molecule kinase activity was not confirmed by another publication. Required for podocyte migration. The protein is Atypical kinase COQ8B, mitochondrial of Mus musculus (Mouse).